The chain runs to 411 residues: Glycogen synthase kinase-3 homolog MsK-2 (411 aa).

In terms of domain architecture, Protein kinase spans 74-358; the sequence is YMAERAVGQG…ALEALVHPFF (285 aa). Residues 80 to 88 and lysine 103 contribute to the ATP site; that span reads VGQGSFGVV. Aspartate 199 serves as the catalytic Proton acceptor. A Phosphotyrosine modification is found at tyrosine 234.

The protein belongs to the protein kinase superfamily. CMGC Ser/Thr protein kinase family. GSK-3 subfamily. Absent in leaves and petioles while a moderate expression is seen in the stems, roots, and nodes.

It catalyses the reaction L-seryl-[protein] + ATP = O-phospho-L-seryl-[protein] + ADP + H(+). The catalysed reaction is L-threonyl-[protein] + ATP = O-phospho-L-threonyl-[protein] + ADP + H(+). The polypeptide is Glycogen synthase kinase-3 homolog MsK-2 (MSK-2) (Medicago sativa (Alfalfa)).